The primary structure comprises 436 residues: WD repeat domain phosphoinositide-interacting protein 2 (436 aa).

Residues 182–222 (AHDSPLAALAFDASGTKLATASEKGTVIRVFSIPEGQKLFE) form a WD 1 repeat. The L/FRRG motif motif lies at 223-226 (FRRG). 2 WD repeats span residues 228 to 267 (KRCVSICSLAFSMDGMFLSASSNTETVHIFKLETVKEKPQ) and 311 to 349 (GHKNICALATIQKIPRLLVGAADGYLYMYNLDPQEGGEC).

It belongs to the WD repeat PROPPIN family.

The protein resides in the preautophagosomal structure membrane. Functionally, component of the autophagy machinery that controls the major intracellular degradation process by which cytoplasmic materials are packaged into autophagosomes and delivered to lysosomes for degradation. Involved in an early step of the formation of preautophagosomal structures. This chain is WD repeat domain phosphoinositide-interacting protein 2 (WIPI2), found in Gallus gallus (Chicken).